The chain runs to 242 residues: NADH-quinone oxidoreductase subunit C (242 aa).

An insert region spans residues 67-101 (VVNSVGLGHKEQGAKPITNRRTTSDNVGESKSIDY).

Belongs to the complex I 30 kDa subunit family. NDH-1 is composed of 14 different subunits. Subunits NuoB, C, D, E, F, and G constitute the peripheral sector of the complex.

It is found in the cell inner membrane. It catalyses the reaction a quinone + NADH + 5 H(+)(in) = a quinol + NAD(+) + 4 H(+)(out). Its function is as follows. NDH-1 shuttles electrons from NADH, via FMN and iron-sulfur (Fe-S) centers, to quinones in the respiratory chain. The immediate electron acceptor for the enzyme in this species is believed to be ubiquinone. Couples the redox reaction to proton translocation (for every two electrons transferred, four hydrogen ions are translocated across the cytoplasmic membrane), and thus conserves the redox energy in a proton gradient. This chain is NADH-quinone oxidoreductase subunit C, found in Rickettsia conorii (strain ATCC VR-613 / Malish 7).